Reading from the N-terminus, the 725-residue chain is Polyribonucleotide nucleotidyltransferase (725 aa).

Mg(2+) contacts are provided by Asp-488 and Asp-494. The region spanning 555 to 614 is the KH domain; it reads PRMITMKIHPDKIREVIGKGGSTIQALTKETGTTIDIQEDGTITIASTSTDGMAEAKRRI. One can recognise an S1 motif domain in the interval 624-692; that stretch reads GKIYAGTVLK…EKGRLRLSLK (69 aa). The tract at residues 702 to 725 is disordered; the sequence is ISPIAQGDAPAAAPAAPASPDQQQ. Positions 706–725 are enriched in low complexity; that stretch reads AQGDAPAAAPAAPASPDQQQ.

The protein belongs to the polyribonucleotide nucleotidyltransferase family. Mg(2+) is required as a cofactor.

It localises to the cytoplasm. The enzyme catalyses RNA(n+1) + phosphate = RNA(n) + a ribonucleoside 5'-diphosphate. Involved in mRNA degradation. Catalyzes the phosphorolysis of single-stranded polyribonucleotides processively in the 3'- to 5'-direction. The sequence is that of Polyribonucleotide nucleotidyltransferase from Cupriavidus metallidurans (strain ATCC 43123 / DSM 2839 / NBRC 102507 / CH34) (Ralstonia metallidurans).